A 164-amino-acid chain; its full sequence is Phosphopantetheine adenylyltransferase (164 aa).

It belongs to the eukaryotic CoaD family.

It localises to the cytoplasm. The enzyme catalyses (R)-4'-phosphopantetheine + ATP + H(+) = 3'-dephospho-CoA + diphosphate. Its pathway is cofactor biosynthesis; coenzyme A biosynthesis. Functionally, reversibly transfers an adenylyl group from ATP to 4'-phosphopantetheine, yielding dephospho-CoA (dPCoA) and pyrophosphate. The chain is Phosphopantetheine adenylyltransferase from Methanothermobacter thermautotrophicus (strain ATCC 29096 / DSM 1053 / JCM 10044 / NBRC 100330 / Delta H) (Methanobacterium thermoautotrophicum).